The primary structure comprises 343 residues: Calcium/calmodulin-dependent protein kinase type 1B (343 aa).

The 256-residue stretch at 15–270 (YEIREKLGSG…CQQALQHLWI (256 aa)) folds into the Protein kinase domain. ATP is bound by residues 21–29 (LGSGAFSEV) and Lys-44. The active-site Proton acceptor is Asp-136. The interval 290-311 (KNFARTHWKRAFNATSFLRHIR) is calmodulin-binding. Positions 314–343 (GQSPEGEEASRQGMTRHSHPGLGTSQSPKW) are disordered. Ser-338 is modified (phosphoserine).

It belongs to the protein kinase superfamily. CAMK Ser/Thr protein kinase family. CaMK subfamily. Isoform 1 and isoform 2 are phosphorylated by CAMKK1. As to expression, isoform 1 is expressed in liver, heart, lung, kidney, spleen and testis. Isoform 2 is predominantly expressed in cerebrum and cerebellum.

The protein localises to the cytoplasm. It is found in the nucleus. It carries out the reaction L-seryl-[protein] + ATP = O-phospho-L-seryl-[protein] + ADP + H(+). The catalysed reaction is L-threonyl-[protein] + ATP = O-phospho-L-threonyl-[protein] + ADP + H(+). Activated by Ca(2+)/calmodulin. Must be phosphorylated to be maximally active. Activated by CAMKK1. Its function is as follows. Calcium/calmodulin-dependent protein kinase belonging to a proposed calcium-triggered signaling cascade. In vitro, isoform 1 and isoform 2 phosphorylate CREB1, SYN1/synapsin I. Phosphorylates and activates CAMK1. The sequence is that of Calcium/calmodulin-dependent protein kinase type 1B (Pnck) from Rattus norvegicus (Rat).